The sequence spans 146 residues: Large ribosomal subunit protein uL15 (146 aa).

A disordered region spans residues 1–51 (MKLHELQPAPGSRKERNRVGRGIGSGNGKTSGKGHKGQNARSGGGVRIGFE). Composition is skewed to gly residues over residues 21-31 (RGIGSGNGKTS) and 42-51 (SGGGVRIGFE).

This sequence belongs to the universal ribosomal protein uL15 family. In terms of assembly, part of the 50S ribosomal subunit.

In terms of biological role, binds to the 23S rRNA. This chain is Large ribosomal subunit protein uL15, found in Anoxybacillus flavithermus (strain DSM 21510 / WK1).